We begin with the raw amino-acid sequence, 87 residues long: Phosphocarrier protein HPr (87 aa).

The HPr domain maps to 1-87 (MAEKTFTITA…EEVIKEGLGE (87 aa)). Residue His15 is the Pros-phosphohistidine intermediate of the active site. Residue Ser46 is modified to Phosphoserine; by HPrK/P.

It belongs to the HPr family.

The protein resides in the cytoplasm. Phosphorylation on Ser-46 inhibits the phosphoryl transfer from enzyme I to HPr. Its function is as follows. General (non sugar-specific) component of the phosphoenolpyruvate-dependent sugar phosphotransferase system (sugar PTS). This major carbohydrate active-transport system catalyzes the phosphorylation of incoming sugar substrates concomitantly with their translocation across the cell membrane. The phosphoryl group from phosphoenolpyruvate (PEP) is transferred to the phosphoryl carrier protein HPr by enzyme I. Phospho-HPr then transfers it to the PTS EIIA domain. P-Ser-HPr interacts with the catabolite control protein A (CcpA), forming a complex that binds to DNA at the catabolite response elements cre, operator sites preceding a large number of catabolite-regulated genes. Thus, P-Ser-HPr is a corepressor in carbon catabolite repression (CCR), a mechanism that allows bacteria to coordinate and optimize the utilization of available carbon sources. P-Ser-HPr also plays a role in inducer exclusion, in which it probably interacts with several non-PTS permeases and inhibits their transport activity. This Halalkalibacterium halodurans (strain ATCC BAA-125 / DSM 18197 / FERM 7344 / JCM 9153 / C-125) (Bacillus halodurans) protein is Phosphocarrier protein HPr (ptsH).